Consider the following 700-residue polypeptide: Serine/threonine-protein kinase WNK1 (700 aa).

The Protein kinase domain maps to 24-281 (GRYNEVLGKG…ARELLDDPFL (258 aa)). Residues 104–107 (TELF) and K154 contribute to the ATP site. Catalysis depends on D171, which acts as the Proton acceptor. The segment covering 314 to 339 (NYPSNSSSLNRQYSNGNYPSNSSSLN) has biased composition (low complexity). 3 disordered regions span residues 314–345 (NYPS…YSNG), 551–575 (ESRE…EVLY), and 647–666 (ESGE…SVSG). Basic and acidic residues predominate over residues 551–565 (ESRELSSIDSGHNHS). The span at 566–575 (EEEEEEEVLY) shows a compositional bias: acidic residues.

This sequence belongs to the protein kinase superfamily. Ser/Thr protein kinase family. WNK subfamily. Post-translationally, autophosphorylated.

The catalysed reaction is L-seryl-[protein] + ATP = O-phospho-L-seryl-[protein] + ADP + H(+). It catalyses the reaction L-threonyl-[protein] + ATP = O-phospho-L-threonyl-[protein] + ADP + H(+). Its function is as follows. Regulates flowering time by modulating the photoperiod pathway. Phosphorylates APRR3. This chain is Serine/threonine-protein kinase WNK1 (WNK1), found in Arabidopsis thaliana (Mouse-ear cress).